Reading from the N-terminus, the 272-residue chain is uncharacterized protein (272 aa).

The AB hydrolase-1 domain occupies 20 to 133 (PVLIFIPGAN…PPINTFLPDS (114 aa)).

This sequence belongs to the AB hydrolase superfamily.

This is an uncharacterized protein from Staphylococcus aureus (strain MSSA476).